The sequence spans 190 residues: dCTP deaminase (190 aa).

DCTP is bound at residue 113-118 (KSTYAR). The Proton donor/acceptor role is filled by glutamate 139. DCTP is bound by residues glutamine 158, tyrosine 172, lysine 181, and glutamine 182.

Belongs to the dCTP deaminase family. In terms of assembly, homotrimer.

It catalyses the reaction dCTP + H2O + H(+) = dUTP + NH4(+). Its pathway is pyrimidine metabolism; dUMP biosynthesis; dUMP from dCTP (dUTP route): step 1/2. Functionally, catalyzes the deamination of dCTP to dUTP. This is dCTP deaminase from Chlamydia abortus (strain DSM 27085 / S26/3) (Chlamydophila abortus).